The chain runs to 258 residues: Microtubule-associated protein RP/EB family member 1 (258 aa).

Positions 14 to 116 (NLSRHDMLAW…FVQWFKKFFD (103 aa)) constitute a Calponin-homology (CH) domain. An EB1 C-terminal domain is found at 175–245 (KKAAGDDESA…LYATDEGFVI (71 aa)).

The protein belongs to the MAPRE family.

It localises to the cytoplasm. Its subcellular location is the cytoskeleton. The protein resides in the microtubule organizing center. The protein localises to the centrosome. It is found in the golgi apparatus. It localises to the spindle. Its subcellular location is the spindle pole. In terms of biological role, plus-end tracking protein (+TIP) that binds to the plus-end of microtubules and regulates the dynamics of the microtubule cytoskeleton. Promotes cytoplasmic microtubule nucleation and elongation. Involved in mitotic spindle positioning by stabilizing microtubules and promoting dynamic connection between astral microtubules and the cortex during mitotic chromosome segregation. The chain is Microtubule-associated protein RP/EB family member 1 (MAPRE1) from Gallus gallus (Chicken).